Consider the following 120-residue polypeptide: Succinate dehydrogenase membrane anchor subunit (120 aa).

The Mitochondrial matrix segment spans residues 1–17 (MTEKLLHFIRTKSGSMH). A helical transmembrane segment spans residues 18-38 (WWLQRFLAILLAPIILYLLFD). At 39–63 (VAIYIGQQSDPTVMMFLNRIFNHNS) the chain is on the mitochondrial intermembrane side. A helical transmembrane segment spans residues 64 to 85 (IFIFITSVILIWHVRGGMEVII). His76 serves as a coordination point for heme. Residues 86 to 95 (EDYVHGEKTR) lie on the Mitochondrial matrix side of the membrane. Position 88 (Tyr88) interacts with a ubiquinone. Residues 96-120 (IVSIFLIRVIAIEIMEYLYKCSIIF) traverse the membrane as a helical segment.

Part of an enzyme complex containing four subunits: a flavoprotein, an iron-sulfur protein, plus two membrane-anchoring proteins. It depends on heme as a cofactor.

The protein resides in the mitochondrion inner membrane. It functions in the pathway carbohydrate metabolism; tricarboxylic acid cycle. In terms of biological role, membrane-anchoring subunit of succinate dehydrogenase (SDH). The sequence is that of Succinate dehydrogenase membrane anchor subunit (SDH4) from Reclinomonas americana.